We begin with the raw amino-acid sequence, 604 residues long: Kelch-like protein 15 (604 aa).

The BTB domain maps to 31–98 (LDVTLVIEDH…MYYGTIELSM (68 aa)). A BACK domain is found at 133-237 (CAEIMRLLDD…TPSSVFEKVK (105 aa)). Kelch repeat units follow at residues 328 to 379 (FVFL…VIGK), 381 to 426 (IYAV…VLNN), 428 to 473 (LFIT…NKSK), 489 to 542 (KLYV…VLDK), and 544 to 590 (IMVL…VCNL).

In terms of assembly, homodimer. Dimerization does not affect PPP2R5B-binding, but is required for its proteasomal degradation. Interacts with CUL3. Directly interacts with PPP2R5B; this interaction leads to PPP2R5B proteasomal degradation. Interacts with RBBP8/CtIP; this interaction leads to RBBP8 proteasomal degradation. Interacts with PACMP micropeptide; interaction prevents ubiquitination and degradation of RBBP8/CtIP.

It localises to the nucleus. It participates in protein modification; protein ubiquitination. Substrate-specific adapter for CUL3 E3 ubiquitin-protein ligase complex. Acts as an adapter for CUL3 to target the serine/threonine-protein phosphatase 2A (PP2A) subunit PPP2R5B for ubiquitination and subsequent proteasomal degradation, thus promoting exchange with other regulatory subunits and regulating PP2A holoenzyme composition. Acts as an adapter for CUL3 to target the DNA-end resection factor RBBP8/CtIP for ubiquitination and subsequent proteasomal degradation. Through the regulation of RBBP8/CtIP protein turnover, plays a key role in DNA damage response, favoring DNA double-strand repair through error-prone non-homologous end joining (NHEJ) over error-free, RBBP8-mediated homologous recombination (HR). The chain is Kelch-like protein 15 (Klhl15) from Mus musculus (Mouse).